The sequence spans 450 residues: tRNA modification GTPase MnmE (450 aa).

Positions 25, 86, and 126 each coordinate (6S)-5-formyl-5,6,7,8-tetrahydrofolate. Residues 221-373 (GLRVALVGRP…LVQALLERCG (153 aa)) form the TrmE-type G domain. Asparagine 231 lines the K(+) pocket. Residues 231–236 (NVGKSS), 250–256 (TDLPGTT), 275–278 (DTAG), and 336–339 (NKAD) contribute to the GTP site. Residue serine 235 participates in Mg(2+) binding. Threonine 250, leucine 252, and threonine 255 together coordinate K(+). Threonine 256 lines the Mg(2+) pocket. Lysine 450 is a binding site for (6S)-5-formyl-5,6,7,8-tetrahydrofolate.

Belongs to the TRAFAC class TrmE-Era-EngA-EngB-Septin-like GTPase superfamily. TrmE GTPase family. Homodimer. Heterotetramer of two MnmE and two MnmG subunits. K(+) is required as a cofactor.

The protein localises to the cytoplasm. In terms of biological role, exhibits a very high intrinsic GTPase hydrolysis rate. Involved in the addition of a carboxymethylaminomethyl (cmnm) group at the wobble position (U34) of certain tRNAs, forming tRNA-cmnm(5)s(2)U34. The protein is tRNA modification GTPase MnmE of Synechococcus sp. (strain CC9605).